Consider the following 3431-residue polypeptide: KICSTOR complex protein SZT2 (3431 aa).

3 disordered regions span residues 699 to 731 (SKEP…PQQA), 1067 to 1101 (LRDP…TLPS), and 1162 to 1231 (KPKL…GADG). The segment at 1082-1188 (VAKDRAGNST…ATGTKATESQ (107 aa)) is mediates interaction with the GATOR1 complex. Composition is skewed to polar residues over residues 1088–1101 (GNST…TLPS) and 1182–1212 (TKAT…TPSC). Position 1275 is a phosphoserine (S1275). The interval 1356–1378 (PPSPGPLSPGPFSSSIEEGPEPR) is disordered. Residue S1415 is modified to Phosphoserine. Disordered regions lie at residues 1512–1534 (YRES…SDAD), 1629–1678 (PPAS…HPGL), 1806–1883 (RAED…PGET), 2113–2148 (PPSL…SDAV), 2450–2512 (TEAG…LEEG), 2735–2756 (ASPP…GGPL), and 2866–2899 (ETCA…DVPP). T1640 carries the phosphothreonine modification. Over residues 1641–1657 (SESSASFPRSPGQPSSL) the composition is skewed to polar residues. S1650 carries the post-translational modification Phosphoserine. The span at 1832 to 1854 (PLISLPSLSQGGSQPGPSRGLSL) shows a compositional bias: low complexity. The segment covering 2118-2129 (LSRSQEPISSED) has biased composition (polar residues). Residues 2460 to 2473 (TTDDIVLDRPEDTR) show a composition bias toward basic and acidic residues. Positions 2739 to 2749 (LSREQGRLSGS) are enriched in low complexity.

As to quaternary structure, part of the KICSTOR complex composed of KPTN, ITFG2, KICS2 and SZT2. SZT2 probably serves as a link between the other three proteins in the KICSTOR complex and may mediate the direct interaction with the GATOR complex via GATOR1. The KICSTOR complex interacts directly with the GATOR1 complex and most probably indirectly with the GATOR2 complex in an amino acid-independent manner. Mostly expressed in brain, spinal cord and lung.

The protein resides in the lysosome membrane. The protein localises to the peroxisome. Functionally, as part of the KICSTOR complex functions in the amino acid-sensing branch of the TORC1 signaling pathway. Recruits, in an amino acid-independent manner, the GATOR1 complex to the lysosomal membranes and allows its interaction with GATOR2 and the RAG GTPases. Functions upstream of the RAG GTPases and is required to negatively regulate mTORC1 signaling in absence of amino acids. In absence of the KICSTOR complex mTORC1 is constitutively localized to the lysosome and activated. The KICSTOR complex is also probably involved in the regulation of mTORC1 by glucose. May play a role in the cellular response to oxidative stress. The protein is KICSTOR complex protein SZT2 of Mus musculus (Mouse).